Here is a 271-residue protein sequence, read N- to C-terminus: Formamidopyrimidine-DNA glycosylase (271 aa).

The active-site Schiff-base intermediate with DNA is Pro-2. The Proton donor role is filled by Glu-3. Catalysis depends on Lys-57, which acts as the Proton donor; for beta-elimination activity. DNA-binding residues include His-90, Arg-109, and Lys-151. The FPG-type zinc finger occupies 236 to 270 (HVYGRGGESCTQCGNLLSEIKLGQRATVFCGLCQT). Arg-260 serves as the catalytic Proton donor; for delta-elimination activity.

This sequence belongs to the FPG family. As to quaternary structure, monomer. The cofactor is Zn(2+).

The catalysed reaction is Hydrolysis of DNA containing ring-opened 7-methylguanine residues, releasing 2,6-diamino-4-hydroxy-5-(N-methyl)formamidopyrimidine.. The enzyme catalyses 2'-deoxyribonucleotide-(2'-deoxyribose 5'-phosphate)-2'-deoxyribonucleotide-DNA = a 3'-end 2'-deoxyribonucleotide-(2,3-dehydro-2,3-deoxyribose 5'-phosphate)-DNA + a 5'-end 5'-phospho-2'-deoxyribonucleoside-DNA + H(+). Its function is as follows. Involved in base excision repair of DNA damaged by oxidation or by mutagenic agents. Acts as a DNA glycosylase that recognizes and removes damaged bases. Has a preference for oxidized purines, such as 7,8-dihydro-8-oxoguanine (8-oxoG). Has AP (apurinic/apyrimidinic) lyase activity and introduces nicks in the DNA strand. Cleaves the DNA backbone by beta-delta elimination to generate a single-strand break at the site of the removed base with both 3'- and 5'-phosphates. This Shewanella woodyi (strain ATCC 51908 / MS32) protein is Formamidopyrimidine-DNA glycosylase.